A 72-amino-acid chain; its full sequence is MRLVVCLVFLASFALVCQGGAQRGGFTGPIPRPPPHGRPPLGPICNACYRLSFSDVRICCNFLGKCCHLVKG.

A signal peptide spans 1-21 (MRLVVCLVFLASFALVCQGGA). Glutamine 22 carries the pyrrolidone carboxylic acid modification. 3 disulfides stabilise this stretch: cysteine 45–cysteine 59, cysteine 48–cysteine 66, and cysteine 60–cysteine 67. Lysine 71 is subject to Lysine amide.

This sequence belongs to the penaeidin family.

Its subcellular location is the cytoplasmic granule. Its function is as follows. Antibacterial and antifungal activity. Presents chitin-binding activity. In Penaeus setiferus (Atlantic white shrimp), this protein is Penaeidin-2d.